The chain runs to 314 residues: DNA-directed RNA polymerase subunit alpha (314 aa).

Residues 1–228 (MAQFHYECVE…SLFEPLKDIT (228 aa)) form an alpha N-terminal domain (alpha-NTD) region. The segment at 240-314 (DPTSQIPIEE…LPQEKVAKAT (75 aa)) is alpha C-terminal domain (alpha-CTD).

Belongs to the RNA polymerase alpha chain family. In cyanobacteria the RNAP catalytic core is composed of 2 alpha, 1 beta, 1 beta', 1 gamma and 1 omega subunit. When a sigma factor is associated with the core the holoenzyme is formed, which can initiate transcription.

The enzyme catalyses RNA(n) + a ribonucleoside 5'-triphosphate = RNA(n+1) + diphosphate. In terms of biological role, DNA-dependent RNA polymerase catalyzes the transcription of DNA into RNA using the four ribonucleoside triphosphates as substrates. In Trichodesmium erythraeum (strain IMS101), this protein is DNA-directed RNA polymerase subunit alpha.